A 99-amino-acid chain; its full sequence is Nucleoid-associated protein SpyM3_1606 (99 aa).

Belongs to the YbaB/EbfC family. In terms of assembly, homodimer.

It is found in the cytoplasm. The protein localises to the nucleoid. Its function is as follows. Binds to DNA and alters its conformation. May be involved in regulation of gene expression, nucleoid organization and DNA protection. In Streptococcus pyogenes serotype M3 (strain ATCC BAA-595 / MGAS315), this protein is Nucleoid-associated protein SpyM3_1606.